The chain runs to 263 residues: Glucosamine-6-phosphate deaminase (263 aa).

Catalysis depends on Asp67, which acts as the Proton acceptor; for enolization step. The active-site For ring-opening step is Asn136. His138 (proton acceptor; for ring-opening step) is an active-site residue. Glu143 acts as the For ring-opening step in catalysis.

This sequence belongs to the glucosamine/galactosamine-6-phosphate isomerase family. NagB subfamily. Homohexamer.

The enzyme catalyses alpha-D-glucosamine 6-phosphate + H2O = beta-D-fructose 6-phosphate + NH4(+). It participates in amino-sugar metabolism; N-acetylneuraminate degradation; D-fructose 6-phosphate from N-acetylneuraminate: step 5/5. Functionally, catalyzes the reversible isomerization-deamination of glucosamine 6-phosphate (GlcN6P) to form fructose 6-phosphate (Fru6P) and ammonium ion. This chain is Glucosamine-6-phosphate deaminase, found in Shewanella halifaxensis (strain HAW-EB4).